The primary structure comprises 275 residues: MAIRIFAILFSIFSLATFAHAQEGTLERSDWRKFFSEFQAKGTIVVADERQADRAMLVFDPVRSKKRYSPASTFKIPHTLFALDAGAVRDEFQIFRWDGVNRGFAGHNQDQDLRSAMRNSTVWVYELFAKEIGDDKARRYLKKIDYGNADPSTSNGDYWIEGSLAISAQEQIAFLRKLYRNELPFRVEHQRLVKDLMIVEAGRNWILRAKTGWEGRMGWWVGWVEWPTGSVFFALNIDTPNRMDDLFKREAIVRAILRSIEALPPNPAVNSDAAR.

The signal sequence occupies residues 1 to 21 (MAIRIFAILFSIFSLATFAHA). Catalysis depends on serine 72, which acts as the Acyl-ester intermediate. Lysine 75 is subject to N6-carboxylysine. 210–212 (KTG) is a binding site for substrate.

The protein belongs to the class-D beta-lactamase family.

It carries out the reaction a beta-lactam + H2O = a substituted beta-amino acid. In terms of biological role, this is an oxacillin-hydrolyzing beta-lactamase. This Escherichia coli protein is Beta-lactamase OXA-2 (bla).